The primary structure comprises 345 residues: Uroporphyrinogen decarboxylase (345 aa).

Substrate contacts are provided by residues 27-31 (RQAGR), phenylalanine 46, aspartate 76, tyrosine 152, serine 207, and histidine 321.

This sequence belongs to the uroporphyrinogen decarboxylase family. As to quaternary structure, homodimer.

The protein resides in the cytoplasm. It catalyses the reaction uroporphyrinogen III + 4 H(+) = coproporphyrinogen III + 4 CO2. Its pathway is porphyrin-containing compound metabolism; protoporphyrin-IX biosynthesis; coproporphyrinogen-III from 5-aminolevulinate: step 4/4. Functionally, catalyzes the decarboxylation of four acetate groups of uroporphyrinogen-III to yield coproporphyrinogen-III. This is Uroporphyrinogen decarboxylase from Staphylococcus aureus (strain Mu3 / ATCC 700698).